Reading from the N-terminus, the 113-residue chain is Nucleoid-associated protein Syncc9605_0027 (113 aa).

It belongs to the YbaB/EbfC family. As to quaternary structure, homodimer.

The protein resides in the cytoplasm. The protein localises to the nucleoid. Functionally, binds to DNA and alters its conformation. May be involved in regulation of gene expression, nucleoid organization and DNA protection. This is Nucleoid-associated protein Syncc9605_0027 from Synechococcus sp. (strain CC9605).